A 473-amino-acid polypeptide reads, in one-letter code: Photosystem II CP43 reaction center protein (473 aa).

Residues 1 to 14 constitute a propeptide that is removed on maturation; the sequence is MKTLYSLRRFYHVE. At Thr-15 the chain carries N-acetylthreonine. Thr-15 is modified (phosphothreonine). The next 5 helical transmembrane spans lie at 69-93, 134-155, 178-200, 255-275, and 291-312; these read LFEV…PHLA, LLGP…KDRN, KALF…RKIT, KPFA…LSYS, and WFNN…ASQA. Glu-367 serves as a coordination point for [CaMn4O5] cluster. Residues 447–471 traverse the membrane as a helical segment; that stretch reads RARAAAAGFEKGIDRDFEPVLSMTP.

It belongs to the PsbB/PsbC family. PsbC subfamily. As to quaternary structure, PSII is composed of 1 copy each of membrane proteins PsbA, PsbB, PsbC, PsbD, PsbE, PsbF, PsbH, PsbI, PsbJ, PsbK, PsbL, PsbM, PsbT, PsbX, PsbY, PsbZ, Psb30/Ycf12, at least 3 peripheral proteins of the oxygen-evolving complex and a large number of cofactors. It forms dimeric complexes. The cofactor is Binds multiple chlorophylls and provides some of the ligands for the Ca-4Mn-5O cluster of the oxygen-evolving complex. It may also provide a ligand for a Cl- that is required for oxygen evolution. PSII binds additional chlorophylls, carotenoids and specific lipids..

It is found in the plastid. The protein localises to the chloroplast thylakoid membrane. One of the components of the core complex of photosystem II (PSII). It binds chlorophyll and helps catalyze the primary light-induced photochemical processes of PSII. PSII is a light-driven water:plastoquinone oxidoreductase, using light energy to abstract electrons from H(2)O, generating O(2) and a proton gradient subsequently used for ATP formation. The protein is Photosystem II CP43 reaction center protein of Fagopyrum esculentum subsp. ancestrale (Wild buckwheat).